The chain runs to 691 residues: Elongation factor G (691 aa).

The tr-type G domain maps to 8–283; it reads EDYRNFGIMA…AVVDYLPSPA (276 aa). Residues 17–24, 81–85, and 135–138 each bind GTP; these read AHIDAGKT, DTPGH, and NKMD.

The protein belongs to the TRAFAC class translation factor GTPase superfamily. Classic translation factor GTPase family. EF-G/EF-2 subfamily.

It is found in the cytoplasm. Catalyzes the GTP-dependent ribosomal translocation step during translation elongation. During this step, the ribosome changes from the pre-translocational (PRE) to the post-translocational (POST) state as the newly formed A-site-bound peptidyl-tRNA and P-site-bound deacylated tRNA move to the P and E sites, respectively. Catalyzes the coordinated movement of the two tRNA molecules, the mRNA and conformational changes in the ribosome. The polypeptide is Elongation factor G (Methylobacterium sp. (strain 4-46)).